We begin with the raw amino-acid sequence, 163 residues long: MIKKLSKLVKDFTLSELRTGMKITAKELVNKKITVQFPEERTPISPRFRGLHALRRYPNGEERCIACKLCEAVCPANAITIESEMRDDGTRRTIVYDIDLFKCIFCGFCEEACPVDAIVETQIFDYAFKSRQGSIMTKERLLEVGSQNEQAINQARLEDAKYK.

2 consecutive 4Fe-4S ferredoxin-type domains span residues 54-84 and 94-123; these read LRRY…IESE and IVYD…ETQI. [4Fe-4S] cluster is bound by residues Cys-64, Cys-67, Cys-70, Cys-74, Cys-103, Cys-106, Cys-109, and Cys-113.

The protein belongs to the complex I 23 kDa subunit family. NDH-1 is composed of 14 different subunits. Subunits NuoA, H, J, K, L, M, N constitute the membrane sector of the complex. It depends on [4Fe-4S] cluster as a cofactor.

The protein localises to the cell inner membrane. The enzyme catalyses a quinone + NADH + 5 H(+)(in) = a quinol + NAD(+) + 4 H(+)(out). Functionally, NDH-1 shuttles electrons from NADH, via FMN and iron-sulfur (Fe-S) centers, to quinones in the respiratory chain. The immediate electron acceptor for the enzyme in this species is believed to be ubiquinone. Couples the redox reaction to proton translocation (for every two electrons transferred, four hydrogen ions are translocated across the cytoplasmic membrane), and thus conserves the redox energy in a proton gradient. The chain is NADH-quinone oxidoreductase subunit I from Ruthia magnifica subsp. Calyptogena magnifica.